The following is a 98-amino-acid chain: uncharacterized protein (98 aa).

Positions 1-23 are cleaved as a signal peptide; it reads MKYVALAFVLSLVILQISAQVGA.

As to expression, nacreous layer of shell (at protein level). Expressed primarily in the mantle with highest level in the mantle pallium and lower level in the mantle edge.

The protein localises to the secreted. This is an uncharacterized protein from Pinctada maxima (Silver-lipped pearl oyster).